The primary structure comprises 209 residues: Orotate phosphoribosyltransferase (209 aa).

5-phospho-alpha-D-ribose 1-diphosphate contacts are provided by residues Arg98, Lys102, His104, and 124-132 (EDLISTGKS). An orotate-binding site is contributed by Ser128.

The protein belongs to the purine/pyrimidine phosphoribosyltransferase family. PyrE subfamily. Homodimer. Mg(2+) is required as a cofactor.

The catalysed reaction is orotidine 5'-phosphate + diphosphate = orotate + 5-phospho-alpha-D-ribose 1-diphosphate. Its pathway is pyrimidine metabolism; UMP biosynthesis via de novo pathway; UMP from orotate: step 1/2. Its function is as follows. Catalyzes the transfer of a ribosyl phosphate group from 5-phosphoribose 1-diphosphate to orotate, leading to the formation of orotidine monophosphate (OMP). This is Orotate phosphoribosyltransferase from Malacoplasma penetrans (strain HF-2) (Mycoplasma penetrans).